The following is a 383-amino-acid chain: Protein delta homolog 2 (383 aa).

Residues 1–26 (MPSGCRCLHLVCLLCILAAPVKPVRA) form the signal peptide. EGF-like domains are found at residues 27–58 (DDCSSHCDLAHGCCAPDGSCRCDPGWEGLHCE), 62–89 (RMPGCQHGTCHQPWQCICHSGWAGKFCD), 91–129 (DEHVCTTQSPCRNGGQCIYDGGGEYHCVCPPGFHGRDCE), and 131–172 (KEGP…AHCE). At 27–306 (DDCSSHCDLA…RQEAGLGKSS (280 aa)) the chain is on the extracellular side. Disulfide bonds link C29/C40, C33/C46, C48/C57, C66/C71, C79/C88, C95/C107, C101/C117, C119/C128, C135/C148, C142/C160, C162/C171, C178/C189, C183/C198, C200/C209, C216/C227, C221/C236, and C238/C247. An N-linked (GlcNAc...) asparagine glycan is attached at N157. The EGF-like 5; calcium-binding domain occupies 174-210 (NVDDCLMRPCANGATCLDGINRFSCLCPEGFAGRFCT). Residues 212–248 (NLDDCASRPCQRGARCRDRVHDFDCLCPSGYGGKTCE) enclose the EGF-like 6; calcium-binding domain. Residues 307–327 (LVAVVVFGAVTATLVLSTVLL) traverse the membrane as a helical segment. Residues 328-383 (TLRAWRRGVCPPGPCCYPAPHYAPARQDQECQVSMLPAGLPLPPDLPPEPGKTTAL) lie on the Cytoplasmic side of the membrane.

It is found in the membrane. In terms of biological role, regulates adipogenesis. The protein is Protein delta homolog 2 (DLK2) of Sus scrofa (Pig).